We begin with the raw amino-acid sequence, 296 residues long: Bifunctional protein FolD 1 (296 aa).

NADP(+) is bound by residues 167 to 169 (GCG) and I235.

This sequence belongs to the tetrahydrofolate dehydrogenase/cyclohydrolase family. Homodimer.

The catalysed reaction is (6R)-5,10-methylene-5,6,7,8-tetrahydrofolate + NADP(+) = (6R)-5,10-methenyltetrahydrofolate + NADPH. It carries out the reaction (6R)-5,10-methenyltetrahydrofolate + H2O = (6R)-10-formyltetrahydrofolate + H(+). Its pathway is one-carbon metabolism; tetrahydrofolate interconversion. Functionally, catalyzes the oxidation of 5,10-methylenetetrahydrofolate to 5,10-methenyltetrahydrofolate and then the hydrolysis of 5,10-methenyltetrahydrofolate to 10-formyltetrahydrofolate. The chain is Bifunctional protein FolD 1 from Nocardioides sp. (strain ATCC BAA-499 / JS614).